The chain runs to 70 residues: Ranatuerin-2SN1 (70 aa).

Residues 1 to 22 (MFTLKKSLLLIFFLGTISLSLC) form the signal peptide. The propeptide at 23–40 (EKERDADDDEVEVIKQEE) is removed in mature form. Cys65 and Cys70 form a disulfide bridge.

Belongs to the frog skin active peptide (FSAP) family. Ranatuerin subfamily. Expressed by the skin glands.

The protein localises to the secreted. Its function is as follows. Antimicrobial peptide. Weakly active against P.faecalis X29. Not active against fungi. Shows very weak hemolytic activity against human erythrocytes. In Sylvirana spinulosa (Fine-spined frog), this protein is Ranatuerin-2SN1.